We begin with the raw amino-acid sequence, 203 residues long: dITP/XTP pyrophosphatase (203 aa).

Residue 8 to 13 (SNNAGK) coordinates substrate. The Mg(2+) site is built by D40 and D69. Catalysis depends on D69, which acts as the Proton acceptor. Substrate contacts are provided by residues S70, 152 to 155 (FGYD), K175, and 180 to 181 (HR).

The protein belongs to the HAM1 NTPase family. In terms of assembly, homodimer. Requires Mg(2+) as cofactor.

The catalysed reaction is XTP + H2O = XMP + diphosphate + H(+). It catalyses the reaction dITP + H2O = dIMP + diphosphate + H(+). The enzyme catalyses ITP + H2O = IMP + diphosphate + H(+). Pyrophosphatase that catalyzes the hydrolysis of nucleoside triphosphates to their monophosphate derivatives, with a high preference for the non-canonical purine nucleotides XTP (xanthosine triphosphate), dITP (deoxyinosine triphosphate) and ITP. Seems to function as a house-cleaning enzyme that removes non-canonical purine nucleotides from the nucleotide pool, thus preventing their incorporation into DNA/RNA and avoiding chromosomal lesions. The chain is dITP/XTP pyrophosphatase from Nitrosomonas europaea (strain ATCC 19718 / CIP 103999 / KCTC 2705 / NBRC 14298).